Here is a 119-residue protein sequence, read N- to C-terminus: Host cell factor C1 regulator 1 (119 aa).

The interval 1 to 34 (MILQQPLERGPQGRAQRDPRAASGASGGLDAREP) is disordered. The interval 57–60 (DHPY) is interaction with HCFC1. The short motif at 91–100 (IPEALRLLRL) is the Nuclear export signal element.

In terms of assembly, interacts with HCFC1.

It localises to the cytoplasm. The protein resides in the nucleus. In terms of biological role, regulates HCFC1 activity by modulating its subcellular localization. Overexpression of HCFC1R1 leads to accumulation of HCFC1 in the cytoplasm. HCFC1R1-mediated export may provide the pool of cytoplasmic HCFC1 required for import of virion-derived VP16 into the nucleus. The protein is Host cell factor C1 regulator 1 (HCFC1R1) of Bos taurus (Bovine).